The sequence spans 568 residues: Natural resistance-associated macrophage protein 2 (568 aa).

The segment covering 1 to 20 (MVLDPKEKMPDDGASGDHGD) has biased composition (basic and acidic residues). The tract at residues 1-45 (MVLDPKEKMPDDGASGDHGDSASLGAINPAYSNSSLPHSTGDSEE) is disordered. The Cytoplasmic portion of the chain corresponds to 1–69 (MVLDPKEKMP…EEYSCFSFRK (69 aa)). Polar residues predominate over residues 30-40 (AYSNSSLPHST). Residues 70-90 (LWAFTGPGFLMSIAYLDPGNI) traverse the membrane as a helical segment. Over 91–95 (ESDLQ) the chain is Extracellular. A helical transmembrane segment spans residues 96 to 117 (SGAVAGFKLLWVLLLATIVGLL). Residues 118–154 (LQRLAARLGVVTGLHLAEVCHRQYPKVPRIILWLMVE) are Cytoplasmic-facing. A helical transmembrane segment spans residues 155 to 175 (LAIIGSDMQEVIGSAIAINLL). Residues 176 to 179 (SAGR) lie on the Extracellular side of the membrane. A helical membrane pass occupies residues 180–194 (VPLWGGVLITIADTF). Topologically, residues 195–208 (VFLFLDKYGLRKLE) are cytoplasmic. The chain crosses the membrane as a helical span at residues 209 to 229 (AFFGFLITIMALTFGYEYITV). Over 230-255 (KPSQSQVLRGMFVPSCPGCRTPQVEQ) the chain is Extracellular. Residues 256-276 (AVGIVGAVIMPHNMYLHSALV) form a helical membrane-spanning segment. The Cytoplasmic segment spans residues 277–301 (KSRQVNRANKQEVREANKYFFIESC). A helical membrane pass occupies residues 302-322 (IALFVSFIINVFVVSVFAEAF). Topologically, residues 323-360 (FEKTNKQVVEVCKNNSSPHADLFPSDNSTLAVDIYKGG) are extracellular. Residues Asn-336 and Asn-349 are each glycosylated (N-linked (GlcNAc...) asparagine). A helical transmembrane segment spans residues 361–381 (VVLGCYFGPAALYIWAVGILA). The Cytoplasmic portion of the chain corresponds to 382-408 (AGQSSTMTGTYSGQFVMEGFLNLKWSR). Residues 409–429 (FARVILTRSIAIIPTLLVAVF) form a helical membrane-spanning segment. Topologically, residues 430-440 (QDVEHLTGMND) are extracellular. A helical transmembrane segment spans residues 441–461 (FLNVLQSLQLPFALIPILTFT). Topologically, residues 462–482 (SLRPVMSEFSNGIGWRIAGGI) are cytoplasmic. Residues 483-503 (LVLIVCSINMYFVVVYVQELG) form a helical membrane-spanning segment. Residues 504–506 (HVA) lie on the Extracellular side of the membrane. A helical membrane pass occupies residues 507–527 (LYVVAAVVSVAYLTFVFYLGW). The Cytoplasmic segment spans residues 528-568 (QCLIALGLSFLDCGRSYRLGLTAQPELYLLNTVDADSVVSR). Residues 555–559 (YLLNT) form a required for early endosome targeting region. A phosphoserine mark is found at Leu-556, Ser-564, and Ser-567.

It belongs to the NRAMP family. Forms a complex with NDFIP1 and NEDD4L, in cortical neurons, in response to iron and cobalt exposure; this interaction leads to SLC11A2 ubiquitination by NEDD4L and proteasome-dependent degradation. Interacts with NDFIP1, NDFIP2 and WWP2; this interaction leads to SLC11A2 ubiquitination by WWP2 and subsequent proteasome-dependent degradation. Interacts with COX2 and TOM6 at the outer mitochondrion membrane. Interacts with ARRDC1; this interaction regulates the incorporation of SLC11A2 into extracellular vesicles through an ubiquitination-dependent mechanism. Interacts with ARRDC4; controls the incorporation of SLC11A2 into extracellular vesicles through an ubiquitination-dependent mechanism. In terms of processing, ubiquitinated by WWP2. Post-translationally, N-glycosylated. In terms of tissue distribution, abundantly expressed in erythroid precursor cells (at protein level). As to expression, expressed in duodenum (at protein level).

It is found in the golgi apparatus. The protein resides in the trans-Golgi network membrane. It localises to the early endosome membrane. The protein localises to the recycling endosome membrane. Its subcellular location is the cell membrane. It is found in the late endosome membrane. The protein resides in the lysosome membrane. It localises to the apical cell membrane. The protein localises to the mitochondrion outer membrane. Its subcellular location is the extracellular vesicle membrane. The catalysed reaction is Fe(2+)(in) + H(+)(in) = Fe(2+)(out) + H(+)(out). It carries out the reaction Co(2+)(out) + H(+)(out) = Co(2+)(in) + H(+)(in). It catalyses the reaction Cd(2+)(out) + H(+)(out) = Cd(2+)(in) + H(+)(in). The enzyme catalyses Mn(2+)(in) + H(+)(in) = Mn(2+)(out) + H(+)(out). The catalysed reaction is Zn(2+)(out) + H(+)(out) = Zn(2+)(in) + H(+)(in). It carries out the reaction Ni(2+)(out) + H(+)(out) = Ni(2+)(in) + H(+)(in). It catalyses the reaction H(+)(in) = H(+)(out). The enzyme catalyses Fe(2+)(in) = Fe(2+)(out). Functionally, proton-coupled metal ion symporter operating with a proton to metal ion stoichiometry of 1:1. Selectively transports various divalent metal cations, in decreasing affinity: Cd(2+) &gt; Fe(2+) &gt; Co(2+), Mn(2+) &gt;&gt; Zn(2+), Ni(2+), VO(2+). Essential for maintenance of iron homeostasis by modulating intestinal absorption of dietary Fe(2+) and TF-associated endosomal Fe(2+) transport in erythroid precursors and other cells. Enables Fe(2+) and Mn(2+) ion entry into mitochondria, and is thus expected to promote mitochondrial heme synthesis, iron-sulfur cluster biogenesis and antioxidant defense. Can mediate uncoupled fluxes of either protons or metal ions. The chain is Natural resistance-associated macrophage protein 2 (Slc11a2) from Mus musculus (Mouse).